Here is a 664-residue protein sequence, read N- to C-terminus: Fructose-1,6-bisphosphatase class 3 (664 aa).

It belongs to the FBPase class 3 family. The cofactor is Mn(2+).

It carries out the reaction beta-D-fructose 1,6-bisphosphate + H2O = beta-D-fructose 6-phosphate + phosphate. It participates in carbohydrate biosynthesis; gluconeogenesis. In Bacteroides fragilis (strain YCH46), this protein is Fructose-1,6-bisphosphatase class 3.